A 268-amino-acid polypeptide reads, in one-letter code: Homeobox protein CDX-1 (268 aa).

The segment at methionine 1 to arginine 152 is disordered. Pro residues-rich tracts occupy residues threonine 29 to tyrosine 42 and alanine 54 to alanine 67. Residues alanine 73–alanine 91 show a composition bias toward low complexity. Positions phenylalanine 92–glycine 108 are enriched in pro residues. The span at serine 115 to proline 128 shows a compositional bias: low complexity. Residues lysine 154–asparagine 213 constitute a DNA-binding region (homeobox). The interval tyrosine 157–tyrosine 178 is interaction with DNA. The tract at residues arginine 196–alanine 207 is interaction with 5-mCpG DNA. The disordered stretch occupies residues glutamate 209 to proline 268. The segment covering proline 229–leucine 246 has biased composition (low complexity).

It belongs to the Caudal homeobox family. In terms of tissue distribution, intestinal epithelium.

It is found in the nucleus. Functionally, plays a role in transcriptional regulation. Involved in activated KRAS-mediated transcriptional activation of PRKD1 in colorectal cancer (CRC) cells. Binds to the PRKD1 promoter in colorectal cancer (CRC) cells. Could play a role in the terminal differentiation of the intestine. Binds preferentially to methylated DNA. The chain is Homeobox protein CDX-1 (Cdx1) from Mus musculus (Mouse).